The primary structure comprises 373 residues: GTPase Obg (373 aa).

An Obg domain is found at 1 to 159 (MKFIDEARIE…RMVRLELKVL (159 aa)). The interval 128 to 147 (LHFKSSTNRAPRQKTDGKPG) is disordered. In terms of domain architecture, OBG-type G spans 160-334 (ADVGLLGMPN…LCYAVFDHIS (175 aa)). GTP contacts are provided by residues 166 to 173 (GMPNAGKS), 191 to 195 (FTTLA), 213 to 216 (DIPG), 284 to 287 (NKLD), and 315 to 317 (SAL). Positions 173 and 193 each coordinate Mg(2+). Residues 354 to 373 (FREKPQAPAAADDAGTDPQV) are disordered. Positions 359 to 373 (QAPAAADDAGTDPQV) are enriched in low complexity.

Belongs to the TRAFAC class OBG-HflX-like GTPase superfamily. OBG GTPase family. In terms of assembly, monomer. It depends on Mg(2+) as a cofactor.

Its subcellular location is the cytoplasm. Functionally, an essential GTPase which binds GTP, GDP and possibly (p)ppGpp with moderate affinity, with high nucleotide exchange rates and a fairly low GTP hydrolysis rate. Plays a role in control of the cell cycle, stress response, ribosome biogenesis and in those bacteria that undergo differentiation, in morphogenesis control. The sequence is that of GTPase Obg from Paraburkholderia phytofirmans (strain DSM 17436 / LMG 22146 / PsJN) (Burkholderia phytofirmans).